We begin with the raw amino-acid sequence, 407 residues long: NADH dehydrogenase [ubiquinone] 1 alpha subcomplex subunit 10, mitochondrial (407 aa).

The N-terminal 60 residues, 1–60 (MTAVFRVGLVRLVSRATQSPNLLQAQTNALPAAFQQRCSISGKTMRGGPRVPKAAPYPYK), are a transit peptide targeting the mitochondrion.

The protein belongs to the complex I NDUFA10 subunit family. Complex I is composed of 45 different subunits. This a component of the hydrophobic protein fraction. Forms a complex including sicily, ND-42 and Hsp83; the complex is necessary to chaperone ND-42 in the cytoplasm before mitochondrial import; the interaction between sicily and ND-42 is direct and occurs preferably between the unprocessed forms in the cytoplasm. Requires FAD as cofactor. Expressed in muscles (at protein level).

Its subcellular location is the mitochondrion matrix. It is found in the cytoplasm. Functionally, accessory subunit of the mitochondrial membrane respiratory chain NADH dehydrogenase (Complex I), that is believed not to be involved in catalysis. Complex I functions in the transfer of electrons from NADH to the respiratory chain. The immediate electron acceptor for the enzyme is believed to be ubiquinone. This chain is NADH dehydrogenase [ubiquinone] 1 alpha subcomplex subunit 10, mitochondrial, found in Drosophila melanogaster (Fruit fly).